The following is a 551-amino-acid chain: Probable 4-coumarate--CoA ligase 1 (551 aa).

ATP-binding residues include Ser-205, Ser-206, Gly-207, Thr-208, Thr-209, and Lys-213. Tyr-253 lines the (E)-4-coumaroyl-AMP pocket. Lys-274 contributes to the CoA binding site. An SBD1 region spans residues 276-346 (EPVRFLELIQ…RFKGRLVIKQ (71 aa)). (E)-4-coumaroyl-AMP is bound by residues Ala-323, Gln-346, Gly-347, and Thr-351. ATP is bound by residues Gln-346, Gly-347, Thr-351, Asp-430, and Arg-445. An SBD2 region spans residues 347 to 409 (GYGATELSPA…IKGPNVMLGY (63 aa)). Residues Lys-447 and Lys-451 each coordinate (E)-4-coumaroyl-AMP. The CoA site is built by Lys-453 and Gly-454. Residue Lys-537 participates in ATP binding.

The protein belongs to the ATP-dependent AMP-binding enzyme family. Mg(2+) serves as cofactor.

The enzyme catalyses (E)-4-coumarate + ATP + CoA = (E)-4-coumaroyl-CoA + AMP + diphosphate. It catalyses the reaction (E)-4-coumarate + ATP + H(+) = (E)-4-coumaroyl-AMP + diphosphate. It carries out the reaction (E)-4-coumaroyl-AMP + CoA = (E)-4-coumaroyl-CoA + AMP + H(+). Its pathway is phytoalexin biosynthesis; 3,4',5-trihydroxystilbene biosynthesis; 3,4',5-trihydroxystilbene from trans-4-coumarate: step 1/2. Its function is as follows. Carboxylate--CoA ligase that may use 4-coumarate as substrate. Follows a two-step reaction mechanism, wherein the carboxylate substrate first undergoes adenylation by ATP, followed by a thioesterification in the presence of CoA to yield the final CoA thioester. The protein is Probable 4-coumarate--CoA ligase 1 (4cl1) of Dictyostelium discoideum (Social amoeba).